Consider the following 235-residue polypeptide: 7-cyano-7-deazaguanine synthase (235 aa).

11–21 (FSGGQDSTTCV) lines the ATP pocket. Residues cysteine 199, cysteine 214, cysteine 217, and cysteine 220 each coordinate Zn(2+).

This sequence belongs to the QueC family. It depends on Zn(2+) as a cofactor.

The catalysed reaction is 7-carboxy-7-deazaguanine + NH4(+) + ATP = 7-cyano-7-deazaguanine + ADP + phosphate + H2O + H(+). It participates in purine metabolism; 7-cyano-7-deazaguanine biosynthesis. In terms of biological role, catalyzes the ATP-dependent conversion of 7-carboxy-7-deazaguanine (CDG) to 7-cyano-7-deazaguanine (preQ(0)). This is 7-cyano-7-deazaguanine synthase from Janthinobacterium sp. (strain Marseille) (Minibacterium massiliensis).